The chain runs to 100 residues: Large ribosomal subunit protein uL23 (100 aa).

The protein belongs to the universal ribosomal protein uL23 family. Part of the 50S ribosomal subunit. Contacts protein L29, and trigger factor when it is bound to the ribosome.

Functionally, one of the early assembly proteins it binds 23S rRNA. One of the proteins that surrounds the polypeptide exit tunnel on the outside of the ribosome. Forms the main docking site for trigger factor binding to the ribosome. The protein is Large ribosomal subunit protein uL23 of Thermotoga sp. (strain RQ2).